Reading from the N-terminus, the 431-residue chain is Ribosome assembly protein SQT1 (431 aa).

WD repeat units follow at residues 63 to 102, 107 to 146, 149 to 192, 199 to 243, 309 to 348, and 350 to 387; these read KHTD…PKFA, GYGE…AQWK, SQMQ…GSLE, VHQQ…QLFK, ELDA…VRHK, and VLED…EKFV.

In terms of assembly, interacts strongly with QSR1. Part of an oligomeric protein complex that is loosely associated with ribosomes.

May be involved in the late step of 60S ribosomal subunit assembly or modification in the cytoplasm. This chain is Ribosome assembly protein SQT1 (SQT1), found in Saccharomyces cerevisiae (strain ATCC 204508 / S288c) (Baker's yeast).